The sequence spans 313 residues: MSKVTVVGAGNVGATCANVLAFNEVADEVVMLDVKEGVSEGKAMDMMQTAQLLGFDTTIVGCTNDYAQTANSDVVVITSGIPRKPGMTREELIGVNAGIVKSVAENLLKYSPNAIIVVISNPMDTMTYLALKSLGLPKNRVIGMGGALDSSRFKYFLSQALGCNANEVEGMVIGGHGDTTMIPLARLATYKGQPVSTLLSEEKLNEVVASTMVGGATLTKLLGTSAWYAPGAAGAYVVESIIHNQKKMVPCSVMLEGEYGESDLCIGVPVILGKNGIEKIVELELNADEKAKFAASAAAVHKTNAALKEVGAL.

NAD(+) is bound by residues 8 to 13 and aspartate 33; that span reads GAGNVG. 2 residues coordinate substrate: arginine 83 and arginine 89. NAD(+)-binding positions include asparagine 96 and 119–121; that span reads ISN. Asparagine 121 and arginine 152 together coordinate substrate. Catalysis depends on histidine 176, which acts as the Proton acceptor.

Belongs to the LDH/MDH superfamily. MDH type 3 family.

The enzyme catalyses (S)-malate + NAD(+) = oxaloacetate + NADH + H(+). Functionally, catalyzes the reversible oxidation of malate to oxaloacetate. In Bacteroides fragilis (strain ATCC 25285 / DSM 2151 / CCUG 4856 / JCM 11019 / LMG 10263 / NCTC 9343 / Onslow / VPI 2553 / EN-2), this protein is Malate dehydrogenase.